Consider the following 328-residue polypeptide: Nodulation protein Z (328 aa).

The GT23 domain maps to 6–317 (CPEGRSVISR…FDLARGVFCQ (312 aa)).

It belongs to the glycosyltransferase 23 family.

In terms of biological role, fucosyltransferase which adds the fucose moiety of the nod factor on its terminal reducing N-acetylglucosamine end. Uses GDP-fucose as the donor group. The chain is Nodulation protein Z (nodZ) from Azorhizobium caulinodans (strain ATCC 43989 / DSM 5975 / JCM 20966 / LMG 6465 / NBRC 14845 / NCIMB 13405 / ORS 571).